Reading from the N-terminus, the 146-residue chain is VHWSAEEKQLITGLWGKVNVAECGAEALARLLIVYPWTQRFFASFGNLSSPAAVLANPMVRAHGKKVLTSFGDAVKNMDNIKNTFAQLSELHCDKLHVDPENFRLLGDILIIVLAAHFSKDFTPDCQAAAQKLVRVVAHALARKYH.

The region spanning 2-146 (HWSAEEKQLI…VAHALARKYH (145 aa)) is the Globin domain. Residues His63 and His92 each coordinate heme b.

It belongs to the globin family. In terms of assembly, heterotetramer of two alpha chains and two beta chains. In terms of tissue distribution, red blood cells.

Functionally, involved in oxygen transport from the lung to the various peripheral tissues. The sequence is that of Hemoglobin subunit beta (HBB) from Aptenodytes forsteri (Emperor penguin).